We begin with the raw amino-acid sequence, 94 residues long: uncharacterized protein (94 aa).

An N-terminal signal peptide occupies residues 1-25 (MRAAIAVLFIALVGLATYHLVMSQA).

This is an uncharacterized protein from Archaeoglobus fulgidus (strain ATCC 49558 / DSM 4304 / JCM 9628 / NBRC 100126 / VC-16).